The chain runs to 353 residues: Methylthioribose-1-phosphate isomerase (353 aa).

Substrate-binding positions include 51–53 (RGA), arginine 94, and glutamine 199. Aspartate 240 functions as the Proton donor in the catalytic mechanism. 250-251 (NK) serves as a coordination point for substrate.

Belongs to the EIF-2B alpha/beta/delta subunits family. MtnA subfamily. Homodimer.

The enzyme catalyses 5-(methylsulfanyl)-alpha-D-ribose 1-phosphate = 5-(methylsulfanyl)-D-ribulose 1-phosphate. Its pathway is amino-acid biosynthesis; L-methionine biosynthesis via salvage pathway; L-methionine from S-methyl-5-thio-alpha-D-ribose 1-phosphate: step 1/6. Functionally, catalyzes the interconversion of methylthioribose-1-phosphate (MTR-1-P) into methylthioribulose-1-phosphate (MTRu-1-P). The protein is Methylthioribose-1-phosphate isomerase of Bacillus cereus (strain ATCC 14579 / DSM 31 / CCUG 7414 / JCM 2152 / NBRC 15305 / NCIMB 9373 / NCTC 2599 / NRRL B-3711).